Reading from the N-terminus, the 798-residue chain is ABC transporter G family member 4 (798 aa).

The segment at Met-1–Gln-51 is disordered. Residues Ile-12 to Ser-29 show a composition bias toward basic and acidic residues. Residues Arg-30 to Asn-41 show a composition bias toward polar residues. The stretch at Asn-34–Thr-83 forms a coiled coil. Residues Gln-42 to Gln-51 are compositionally biased toward low complexity. Residues Ile-211–Pro-464 form the ABC transporter domain. Gly-253–Ser-260 is a binding site for ATP. The next 7 helical transmembrane spans lie at Val-540–Phe-560, Leu-579–Val-599, Ile-628–Leu-648, Ile-656–Met-676, Phe-687–Ile-707, Ser-713–Ile-733, and Ser-771–Tyr-791. Positions Val-540 to Phe-793 constitute an ABC transmembrane type-2 domain.

This sequence belongs to the ABC transporter superfamily. ABCG family. Eye pigment precursor importer (TC 3.A.1.204) subfamily.

The protein resides in the membrane. The sequence is that of ABC transporter G family member 4 (abcG4) from Dictyostelium discoideum (Social amoeba).